Consider the following 727-residue polypeptide: Fatty acid oxidation complex subunit alpha (727 aa).

Positions 16 to 205 (NQTASVFSFD…RLGLVDDAVP (190 aa)) are enoyl-CoA hydratase. Residues 321–727 (AKIKHVGILG…MAEQNKSFYP (407 aa)) form a 3-hydroxyacyl-CoA dehydrogenase region.

This sequence in the N-terminal section; belongs to the enoyl-CoA hydratase/isomerase family. It in the central section; belongs to the 3-hydroxyacyl-CoA dehydrogenase family. In terms of assembly, heterotetramer of two alpha chains (FadJ) and two beta chains (FadI).

The protein localises to the cytoplasm. The enzyme catalyses a (3S)-3-hydroxyacyl-CoA = a (2E)-enoyl-CoA + H2O. It carries out the reaction a 4-saturated-(3S)-3-hydroxyacyl-CoA = a (3E)-enoyl-CoA + H2O. The catalysed reaction is a (3S)-3-hydroxyacyl-CoA + NAD(+) = a 3-oxoacyl-CoA + NADH + H(+). It catalyses the reaction (3S)-3-hydroxybutanoyl-CoA = (3R)-3-hydroxybutanoyl-CoA. Its pathway is lipid metabolism; fatty acid beta-oxidation. In terms of biological role, catalyzes the formation of a hydroxyacyl-CoA by addition of water on enoyl-CoA. Also exhibits 3-hydroxyacyl-CoA epimerase and 3-hydroxyacyl-CoA dehydrogenase activities. This is Fatty acid oxidation complex subunit alpha from Photorhabdus laumondii subsp. laumondii (strain DSM 15139 / CIP 105565 / TT01) (Photorhabdus luminescens subsp. laumondii).